A 530-amino-acid chain; its full sequence is N-acetylmuramoyl-L-alanine amidase (530 aa).

The signal sequence occupies residues 1-22 (MKAWGALWIVLGLLLWPEPGAA). Residues Asn-61, Asn-80, and Asn-174 are each glycosylated (N-linked (GlcNAc...) asparagine). Ser-219 carries the post-translational modification Phosphoserine. A glycan (N-linked (GlcNAc...) asparagine) is linked at Asn-335. One can recognise an N-acetylmuramoyl-L-alanine amidase domain in the interval 386 to 512 (FLYVHHTYVP…RQLVLTHCPG (127 aa)). A Zn(2+)-binding site is contributed by His-390. The cysteines at positions 399 and 405 are disulfide-linked. Residue Asn-465 is glycosylated (N-linked (GlcNAc...) asparagine). Residues His-502 and Cys-510 each coordinate Zn(2+).

Belongs to the N-acetylmuramoyl-L-alanine amidase 2 family. It depends on Zn(2+) as a cofactor. In terms of tissue distribution, strongly expressed in liver and fetal liver.

The protein resides in the secreted. The protein localises to the membrane. It carries out the reaction Hydrolyzes the link between N-acetylmuramoyl residues and L-amino acid residues in certain cell-wall glycopeptides.. Functionally, may play a scavenger role by digesting biologically active peptidoglycan (PGN) into biologically inactive fragments. Has no direct bacteriolytic activity. The chain is N-acetylmuramoyl-L-alanine amidase (Pglyrp2) from Mus musculus (Mouse).